The primary structure comprises 638 residues: 1-deoxy-D-xylulose-5-phosphate synthase (638 aa).

Thiamine diphosphate is bound by residues histidine 72 and 113 to 115 (GHA). Residue aspartate 144 coordinates Mg(2+). Thiamine diphosphate is bound by residues 145–146 (GA), asparagine 174, tyrosine 287, and glutamate 370. Position 174 (asparagine 174) interacts with Mg(2+).

Belongs to the transketolase family. DXPS subfamily. As to quaternary structure, homodimer. The cofactor is Mg(2+). Thiamine diphosphate is required as a cofactor.

The catalysed reaction is D-glyceraldehyde 3-phosphate + pyruvate + H(+) = 1-deoxy-D-xylulose 5-phosphate + CO2. It functions in the pathway metabolic intermediate biosynthesis; 1-deoxy-D-xylulose 5-phosphate biosynthesis; 1-deoxy-D-xylulose 5-phosphate from D-glyceraldehyde 3-phosphate and pyruvate: step 1/1. Its function is as follows. Catalyzes the acyloin condensation reaction between C atoms 2 and 3 of pyruvate and glyceraldehyde 3-phosphate to yield 1-deoxy-D-xylulose-5-phosphate (DXP). The chain is 1-deoxy-D-xylulose-5-phosphate synthase from Picosynechococcus sp. (strain ATCC 27264 / PCC 7002 / PR-6) (Agmenellum quadruplicatum).